A 319-amino-acid chain; its full sequence is MTYARIAKSSRYLPEFAVSNDDLSQIMETSDEWIKTRTGISSRRISQQENTSDLAIQVAKQLLAGEDPAGVDLIIVATMSPDAYTPATAALVQAAVGAENAACFDLSAACSGFVYALDVAEKMLRRPGGMALVIGAETLSKLVDWQDRTTAVLFGDGAGGVLVKNDALEPHFLASQLKSYGHLAKFLSAGQTSPQPFPGPVTDLAPFKMNGREVYKFATHKVPEVITACLEEAGVGLAEVDLFLFHQANYRIVKQVARRLDLPEEKFPCNIAEYGNTSAASEAILLAELAEEGKAQAGDLVVLAGFGGGLTAAAQLVRL.

Catalysis depends on residues cysteine 110 and histidine 246. The tract at residues 247-251 is ACP-binding; that stretch reads QANYR. The active site involves asparagine 276.

Belongs to the thiolase-like superfamily. FabH family. As to quaternary structure, homodimer.

It is found in the cytoplasm. The enzyme catalyses malonyl-[ACP] + acetyl-CoA + H(+) = 3-oxobutanoyl-[ACP] + CO2 + CoA. It functions in the pathway lipid metabolism; fatty acid biosynthesis. In terms of biological role, catalyzes the condensation reaction of fatty acid synthesis by the addition to an acyl acceptor of two carbons from malonyl-ACP. Catalyzes the first condensation reaction which initiates fatty acid synthesis and may therefore play a role in governing the total rate of fatty acid production. Possesses both acetoacetyl-ACP synthase and acetyl transacylase activities. Its substrate specificity determines the biosynthesis of branched-chain and/or straight-chain of fatty acids. The polypeptide is Beta-ketoacyl-[acyl-carrier-protein] synthase III (Lactobacillus delbrueckii subsp. bulgaricus (strain ATCC BAA-365 / Lb-18)).